The primary structure comprises 461 residues: Protein-serine O-palmitoleoyltransferase porcupine (461 aa).

At methionine 1–cysteine 17 the chain is on the cytoplasmic side. The chain crosses the membrane as a helical span at residues leucine 18–alanine 38. The Extracellular portion of the chain corresponds to cysteine 39–histidine 66. The chain crosses the membrane as a helical span at residues phenylalanine 67–phenylalanine 87. At leucine 88–arginine 95 the chain is on the cytoplasmic side. The chain crosses the membrane as a helical span at residues glycine 96–aspartate 116. Over threonine 117–proline 152 the chain is Extracellular. A helical transmembrane segment spans residues valine 153–phenylalanine 173. The Cytoplasmic portion of the chain corresponds to histidine 174–alanine 198. Cysteine 187 is lipidated: S-palmitoyl cysteine. Residues leucine 199–isoleucine 219 traverse the membrane as a helical segment. At proline 220–histidine 252 the chain is on the extracellular side. The helical transmembrane segment at phenylalanine 253–phenylalanine 273 threads the bilayer. The Cytoplasmic portion of the chain corresponds to threonine 274–serine 337. A helical membrane pass occupies residues alanine 338–threonine 358. Histidine 341 is an active-site residue. Over tyrosine 359–arginine 396 the chain is Extracellular. The helical transmembrane segment at alanine 397–phenylalanine 417 threads the bilayer. The Cytoplasmic portion of the chain corresponds to aspartate 418–glycine 461.

The protein belongs to the membrane-bound acyltransferase family. Porcupine subfamily. As to quaternary structure, interacts with WNT1, WNT3, WNT3A, WNT4, WNT5A, WNT5B, WNT6, WNT7A and WNT7B. As to expression, isoform 1 is expressed in fetal brain, brain, amygdala, caudate nucleus, cerebellum, hippocampus, pituitary, thalamus, heart, skeletal muscle and testis. Isoform 4 is expressed in amygdala, corpus callosum, hippocampus, spinal cord, kidney, liver, lung, spleen, uterus, testis. Isoform 2 and isoform 3 are expressed in substantia negra, spinal cord, heart and lung.

Its subcellular location is the endoplasmic reticulum membrane. It carries out the reaction [Wnt protein]-L-serine + (9Z)-hexadecenoyl-CoA = [Wnt protein]-O-(9Z)-hexadecenoyl-L-serine + CoA. Protein-serine O-palmitoleoyltransferase that acts as a key regulator of the Wnt signaling pathway by mediating the attachment of palmitoleate, a 16-carbon monounsaturated fatty acid (C16:1(9Z)), to Wnt proteins. Serine palmitoleoylation of WNT proteins is required for efficient binding to frizzled receptors. This chain is Protein-serine O-palmitoleoyltransferase porcupine, found in Homo sapiens (Human).